Reading from the N-terminus, the 101-residue chain is Pro-corazonin (101 aa).

Residues 1–16 form the signal peptide; it reads MLVLFVLSLVVSCALC. An Asparagine amide modification is found at Asn-27. Residues 31-101 constitute a propeptide that is removed on maturation; it reads SNFPAEISAL…REKAPNNDNY (71 aa).

It belongs to the corazonin family. As to expression, expressed in central brain and the retrocerebral complex but not in antennal lobes, optic lobes or in gnathal, thoracic and abdominal ganglia (at protein level).

Its subcellular location is the secreted. Its function is as follows. Cardioactive peptide. Corazonin is probably involved in the physiological regulation of the heart beat. The polypeptide is Pro-corazonin (Camponotus floridanus (Florida carpenter ant)).